Reading from the N-terminus, the 427-residue chain is 3-phosphoshikimate 1-carboxyvinyltransferase (427 aa).

3-phosphoshikimate contacts are provided by Lys-20, Ser-21, and Arg-25. Lys-20 provides a ligand contact to phosphoenolpyruvate. Gly-92 and Arg-120 together coordinate phosphoenolpyruvate. 4 residues coordinate 3-phosphoshikimate: Ser-166, Gln-168, Asp-312, and Lys-339. Gln-168 provides a ligand contact to phosphoenolpyruvate. Residue Asp-312 is the Proton acceptor of the active site. Phosphoenolpyruvate is bound by residues Arg-343 and Arg-385.

This sequence belongs to the EPSP synthase family. Monomer.

The protein localises to the cytoplasm. It carries out the reaction 3-phosphoshikimate + phosphoenolpyruvate = 5-O-(1-carboxyvinyl)-3-phosphoshikimate + phosphate. Its pathway is metabolic intermediate biosynthesis; chorismate biosynthesis; chorismate from D-erythrose 4-phosphate and phosphoenolpyruvate: step 6/7. In terms of biological role, catalyzes the transfer of the enolpyruvyl moiety of phosphoenolpyruvate (PEP) to the 5-hydroxyl of shikimate-3-phosphate (S3P) to produce enolpyruvyl shikimate-3-phosphate and inorganic phosphate. The polypeptide is 3-phosphoshikimate 1-carboxyvinyltransferase (Streptococcus pyogenes serotype M4 (strain MGAS10750)).